Here is a 455-residue protein sequence, read N- to C-terminus: tRNA modification GTPase MnmE (455 aa).

(6S)-5-formyl-5,6,7,8-tetrahydrofolate contacts are provided by lysine 29, glutamate 91, and arginine 131. The region spanning 226–378 (GLKVALVGLP…LIQELLKLAG (153 aa)) is the TrmE-type G domain. Asparagine 236 serves as a coordination point for K(+). Residues 236–241 (NVGKSS), 255–261 (TDLPGTT), 280–283 (DTAG), and 341–344 (NKAD) each bind GTP. Serine 240 lines the Mg(2+) pocket. The K(+) site is built by threonine 255, leucine 257, and threonine 260. Mg(2+) is bound at residue threonine 261. Lysine 455 provides a ligand contact to (6S)-5-formyl-5,6,7,8-tetrahydrofolate.

Belongs to the TRAFAC class TrmE-Era-EngA-EngB-Septin-like GTPase superfamily. TrmE GTPase family. Homodimer. Heterotetramer of two MnmE and two MnmG subunits. It depends on K(+) as a cofactor.

Its subcellular location is the cytoplasm. Exhibits a very high intrinsic GTPase hydrolysis rate. Involved in the addition of a carboxymethylaminomethyl (cmnm) group at the wobble position (U34) of certain tRNAs, forming tRNA-cmnm(5)s(2)U34. In Prochlorococcus marinus (strain SARG / CCMP1375 / SS120), this protein is tRNA modification GTPase MnmE.